We begin with the raw amino-acid sequence, 350 residues long: DNA repair protein RAD51 homolog 2 (350 aa).

The interval 1 to 75 (MSSKKLRRVG…TAYELKTRRS (75 aa)) is interaction with RAD51C. Residue 108-115 (GPPGCGKT) coordinates ATP.

It belongs to the RecA family. RAD51 subfamily. As to quaternary structure, part of the BCDX2 complex consisting of RAD51B, RAD51C, RAD51D and XRCC2; the complex has a ring-like structure arranged into a flat disc around a central channel. The BCDX2 subcomplex RAD51B:RAD51C interacts with RAD51. Interacts with SWSAP1; involved in homologous recombination repair. Interacts with HELQ. Post-translationally, phosphorylated on tyrosine residues by BCR-ABL. As to expression, expressed in a wide range of tissues.

The protein localises to the nucleus. In terms of biological role, involved in the homologous recombination repair (HRR) pathway of double-stranded DNA breaks arising during DNA replication or induced by DNA-damaging agents. May promote the assembly of presynaptic RAD51 nucleoprotein filaments. Binds single-stranded DNA and double-stranded DNA and has DNA-dependent ATPase activity. Part of the RAD51 paralog protein complex BCDX2 which acts in the BRCA1-BRCA2-dependent HR pathway. Upon DNA damage, BCDX2 acts downstream of BRCA2 recruitment and upstream of RAD51 recruitment. BCDX2 binds predominantly to the intersection of the four duplex arms of the Holliday junction and to junction of replication forks. The BCDX2 complex was originally reported to bind single-stranded DNA, single-stranded gaps in duplex DNA and specifically to nicks in duplex DNA. The BCDX2 subcomplex RAD51B:RAD51C exhibits single-stranded DNA-dependent ATPase activity suggesting an involvement in early stages of the HR pathway. This Mus musculus (Mouse) protein is DNA repair protein RAD51 homolog 2 (Rad51b).